A 253-amino-acid polypeptide reads, in one-letter code: 3-dehydroquinate dehydratase (253 aa).

3-dehydroquinate contacts are provided by residues 46–48 (EWR) and Arg-82. The Proton donor/acceptor role is filled by His-143. Lys-170 functions as the Schiff-base intermediate with substrate in the catalytic mechanism. Residues Arg-213, Ser-232, and Gln-236 each coordinate 3-dehydroquinate.

It belongs to the type-I 3-dehydroquinase family. As to quaternary structure, homodimer.

The catalysed reaction is 3-dehydroquinate = 3-dehydroshikimate + H2O. Its pathway is metabolic intermediate biosynthesis; chorismate biosynthesis; chorismate from D-erythrose 4-phosphate and phosphoenolpyruvate: step 3/7. Its function is as follows. Involved in the third step of the chorismate pathway, which leads to the biosynthesis of aromatic amino acids. Catalyzes the cis-dehydration of 3-dehydroquinate (DHQ) and introduces the first double bond of the aromatic ring to yield 3-dehydroshikimate. The polypeptide is 3-dehydroquinate dehydratase (Bacillus velezensis (strain DSM 23117 / BGSC 10A6 / LMG 26770 / FZB42) (Bacillus amyloliquefaciens subsp. plantarum)).